Consider the following 189-residue polypeptide: Homeobox protein HD-2 (189 aa).

The segment at residues 119 to 181 is a DNA-binding region (homeobox; TALE-type); the sequence is KPRTRANFPM…NARRRILPFM (63 aa).

The protein belongs to the TALE/KNOX homeobox family.

It is found in the nucleus. This Encephalitozoon cuniculi (strain GB-M1) (Microsporidian parasite) protein is Homeobox protein HD-2 (HD-2).